The chain runs to 82 residues: Protein ImpC (82 aa).

It belongs to the DinI family.

In terms of biological role, the imp operon is involved in UV protection and mutation, however the ImpC protein is not essential for these functions. This chain is Protein ImpC (impC), found in Salmonella typhimurium.